The following is a 210-amino-acid chain: Claudin-4 (210 aa).

The Cytoplasmic segment spans residues Met1 to Gln7. An interaction with EPHA2 region spans residues Met1–Lys103. The chain crosses the membrane as a helical span at residues Val8 to Pro28. The Extracellular portion of the chain corresponds to Met29–Arg81. Cys54 and Cys64 are joined by a disulfide. A helical membrane pass occupies residues Ala82–Gly102. Topologically, residues Lys103 to Lys116 are cytoplasmic. A helical transmembrane segment spans residues Ile117–Ser137. The Extracellular portion of the chain corresponds to Trp138–Met160. The helical transmembrane segment at Gly161–Leu181 threads the bilayer. The Cytoplasmic portion of the chain corresponds to Cys182–Val210. A Phosphotyrosine; by EPHA2 modification is found at Tyr209. An interactions with TJP1, TJP2 and TJP3 region spans residues Tyr209 to Val210.

It belongs to the claudin family. Can form heteropolymeric strands with other claudins. Interacts with CLDN8. Interacts with CLDN1. Directly interacts with TJP1/ZO-1, TJP2/ZO-2 and TJP3/ZO-3. Interacts with EPHA2; phosphorylates CLDN4 and may regulate tight junctions. Post-translationally, phosphorylated. Phosphorylation by EPHA2 is stimulated by EFNA1 and alters interaction with TJP1. As to expression, expressed primarily in lung and kidney. Present in both cortical and medullar collecting ducts (at protein level).

It localises to the cell junction. It is found in the tight junction. Its subcellular location is the cell membrane. It catalyses the reaction chloride(in) = chloride(out). It carries out the reaction bromide(in) = bromide(out). The enzyme catalyses iodide(out) = iodide(in). The catalysed reaction is fluoride(in) = fluoride(out). Can associate with other claudins to regulate tight junction structural and functional strand dynamics. May coassemble with CLDN8 into tight junction strands containing anion-selective channels that convey paracellular chloride permeability in renal collecting ducts. May integrate into CLDN3 strands to modulate localized tight junction barrier properties. May disrupt strand assembly of channel-forming CLDN2 and CLDN15 and inhibit cation conductance. Cannot form tight junction strands on its own. The protein is Claudin-4 of Mus musculus (Mouse).